The primary structure comprises 166 residues: MNEDLISQIKEVVTAENQEKLIKIIQLLESSNYELRGKINPDLQLSASALVFKEDKLFFIEHPYQKELLLPAGHVELKESPLDTAIREFHEETGFFAKKMGKLVDVNLIDIPFNETKNEKKHQHIDFRYLLELEEQEAELAELPFFLLELEEAPEEFKKYYRYKNI.

Residues 42–166 enclose the Nudix hydrolase domain; the sequence is DLQLSASALV…FKKYYRYKNI (125 aa). Residues 73 to 94 carry the Nudix box motif; the sequence is GHVELKESPLDTAIREFHEETG. Residues Glu-88 and Glu-92 each contribute to the Mg(2+) site.

This sequence belongs to the Nudix hydrolase family. As to quaternary structure, monomer. Mg(2+) is required as a cofactor.

Its pathway is cofactor biosynthesis; tetrahydrofolate biosynthesis; 2-amino-4-hydroxy-6-hydroxymethyl-7,8-dihydropteridine diphosphate from 7,8-dihydroneopterin triphosphate: step 1/4. Probably mediates the removal of pyrophosphate from dihydroneopterin triphosphate (DHNTP), a possible step in the pterin branch of the folate synthesis pathway. The sequence is that of Probable DHNTP pyrophosphohydrolase (folQ) from Lactococcus lactis subsp. cremoris (strain MG1363).